The sequence spans 218 residues: uncharacterized protein (218 aa).

5 helical membrane passes run 27 to 49, 57 to 77, 115 to 135, 142 to 162, and 180 to 200; these read IALE…GFLA, GGVL…GYWV, VFFG…AGIV, FLLY…SLAY, and FSWF…VFHF.

This sequence belongs to the DedA family.

The protein localises to the cell membrane. This is an uncharacterized protein from Synechocystis sp. (strain ATCC 27184 / PCC 6803 / Kazusa).